Here is a 518-residue protein sequence, read N- to C-terminus: Major facilitator superfamily domain-containing protein 8 (518 aa).

A disordered region spans residues 1-20; it reads MAGLRNESEQEPLLGDTPGS. Topologically, residues 1-40 are cytoplasmic; that stretch reads MAGLRNESEQEPLLGDTPGSREWDILETEEHYKSRWRSIR. The Dileucine internalization motif signature appears at 13-14; that stretch reads LL. Residues 41-61 form a helical membrane-spanning segment; that stretch reads ILYLTMFLSSVGFSVVMMSIW. Residues 62–74 are Extracellular-facing; it reads PYLQKIDPTADTS. Residues 75 to 95 form a helical membrane-spanning segment; the sequence is FLGWVIASYSLGQMVASPIFG. At 96–105 the chain is on the cytoplasmic side; sequence LWSNYRPRKE. Residues 106 to 126 form a helical membrane-spanning segment; it reads PLIVSILISVAANCLYAYLHI. The Extracellular portion of the chain corresponds to 127–131; the sequence is PASHN. The helical transmembrane segment at 132–152 threads the bilayer; that stretch reads KYYMLVARGLLGIGAGNVAVV. The Cytoplasmic segment spans residues 153–173; it reads RSYTAGATSLQERTSSMANIS. A helical transmembrane segment spans residues 174 to 194; that stretch reads MCQALGFILGPVFQTCFTFLG. Residues 195-211 are Extracellular-facing; it reads EKGVTWDVIKLQINMYT. A helical transmembrane segment spans residues 212 to 232; it reads TPVLLSAFLGILNIILILAIL. The Cytoplasmic portion of the chain corresponds to 233–266; it reads REHRVDDSGRQCKSINFEEASTDEAQVPQGNIDQ. The helical transmembrane segment at 267-287 threads the bilayer; that stretch reads VAVVAINVLFFVTLFIFALFE. At 288–304 the chain is on the extracellular side; that stretch reads TIITPLTMDMYAWTQEQ. The chain crosses the membrane as a helical span at residues 305 to 325; the sequence is AVLYNGIILAALGVEAVVIFL. The Cytoplasmic portion of the chain corresponds to 326-337; sequence GVKLLSKKIGER. Residues 338-358 form a helical membrane-spanning segment; sequence AILLGGLIVVWVGFFILLPWG. Residues 359-412 lie on the Extracellular side of the membrane; the sequence is NQFPKIQWEDLHNNSIPNTTFGEIIIGLWKSPMEDDNERPTGCSIEQAWCLYTP. 2 N-linked (GlcNAc...) asparagine glycosylation sites follow: asparagine 371 and asparagine 376. The helical transmembrane segment at 413–433 threads the bilayer; the sequence is VIHLAQFLTSAVLIGLGYPVC. At 434-451 the chain is on the cytoplasmic side; that stretch reads NLMSYTLYSKILGPKPQG. The helical transmembrane segment at 452 to 472 threads the bilayer; it reads VYMGWLTASGSGARILGPMFI. At 473 to 482 the chain is on the extracellular side; the sequence is SQVYAHWGPR. A helical membrane pass occupies residues 483–503; the sequence is WAFSLVCGIIVLTITLLGVVY. The Cytoplasmic portion of the chain corresponds to 504-518; sequence KRLIALSVRYGRIQE.

It belongs to the major facilitator superfamily. Expressed at very low levels in all tissues tested.

Its subcellular location is the endosome membrane. The protein localises to the lysosome membrane. It carries out the reaction chloride(in) = chloride(out). The catalysed reaction is iodide(out) = iodide(in). It catalyses the reaction fluoride(in) = fluoride(out). With respect to regulation, inhibited by chloride channel blockers 4,4'-diisothiocyano-2,2'-stilbenedisulfonate (DIDS), niflumic acid (NFA), and 5-Nitro-2-(3-phenylpropylamino) benzoic acid (NPPB). Outward-rectifying chloride channel involved in endolysosomal chloride homeostasis, membrane fusion and function. Conducts chloride currents up to hundreds of picoamperes. Regulates lysosomal calcium content by reducing the lysosomal membrane potential, thereby activating TRPML1 channel and further release of lysosomal calcium ions. Regulates the pH in endolysosomal compartments and may contribute to progressive acidification from endosome to lysosome. Permeable to other halides such as iodide and fluoride ions. This is Major facilitator superfamily domain-containing protein 8 from Homo sapiens (Human).